Here is a 720-residue protein sequence, read N- to C-terminus: Phosphoribosylformylglycinamidine synthase subunit PurL (720 aa).

Histidine 47 is an active-site residue. ATP is bound by residues tyrosine 50 and lysine 89. Mg(2+) is bound at residue glutamate 91. Substrate-binding positions include 92 to 95 (SHNH) and arginine 114. Catalysis depends on histidine 93, which acts as the Proton acceptor. Aspartate 115 is a binding site for Mg(2+). Glutamine 238 is a substrate binding site. Mg(2+) is bound at residue aspartate 266. Residue 310 to 312 (ESQ) coordinates substrate. ATP is bound by residues aspartate 488 and glycine 525. Asparagine 526 is a binding site for Mg(2+). Residue serine 528 coordinates substrate.

This sequence belongs to the FGAMS family. As to quaternary structure, monomer. Part of the FGAM synthase complex composed of 1 PurL, 1 PurQ and 2 PurS subunits.

It localises to the cytoplasm. The catalysed reaction is N(2)-formyl-N(1)-(5-phospho-beta-D-ribosyl)glycinamide + L-glutamine + ATP + H2O = 2-formamido-N(1)-(5-O-phospho-beta-D-ribosyl)acetamidine + L-glutamate + ADP + phosphate + H(+). The protein operates within purine metabolism; IMP biosynthesis via de novo pathway; 5-amino-1-(5-phospho-D-ribosyl)imidazole from N(2)-formyl-N(1)-(5-phospho-D-ribosyl)glycinamide: step 1/2. Its function is as follows. Part of the phosphoribosylformylglycinamidine synthase complex involved in the purines biosynthetic pathway. Catalyzes the ATP-dependent conversion of formylglycinamide ribonucleotide (FGAR) and glutamine to yield formylglycinamidine ribonucleotide (FGAM) and glutamate. The FGAM synthase complex is composed of three subunits. PurQ produces an ammonia molecule by converting glutamine to glutamate. PurL transfers the ammonia molecule to FGAR to form FGAM in an ATP-dependent manner. PurS interacts with PurQ and PurL and is thought to assist in the transfer of the ammonia molecule from PurQ to PurL. The sequence is that of Phosphoribosylformylglycinamidine synthase subunit PurL from Cereibacter sphaeroides (strain KD131 / KCTC 12085) (Rhodobacter sphaeroides).